The following is a 484-amino-acid chain: ATP synthase subunit beta (484 aa).

The disordered stretch occupies residues 104-123 (ERGPIGSKQTMPIHADAPPF). 156-163 (GGAGVGKT) contributes to the ATP binding site.

This sequence belongs to the ATPase alpha/beta chains family. As to quaternary structure, F-type ATPases have 2 components, CF(1) - the catalytic core - and CF(0) - the membrane proton channel. CF(1) has five subunits: alpha(3), beta(3), gamma(1), delta(1), epsilon(1). CF(0) has three main subunits: a(1), b(2) and c(9-12). The alpha and beta chains form an alternating ring which encloses part of the gamma chain. CF(1) is attached to CF(0) by a central stalk formed by the gamma and epsilon chains, while a peripheral stalk is formed by the delta and b chains.

It is found in the cell inner membrane. It carries out the reaction ATP + H2O + 4 H(+)(in) = ADP + phosphate + 5 H(+)(out). Its function is as follows. Produces ATP from ADP in the presence of a proton gradient across the membrane. The catalytic sites are hosted primarily by the beta subunits. The polypeptide is ATP synthase subunit beta (Zymomonas mobilis subsp. mobilis (strain ATCC 31821 / ZM4 / CP4)).